The following is a 391-amino-acid chain: Ribonucleoside-diphosphate reductase small chain (391 aa).

Residues Asp135, Glu166, and His169 each coordinate Fe cation. Tyr173 is an active-site residue. Residues Glu229, Glu263, and His266 each coordinate Fe cation.

This sequence belongs to the ribonucleoside diphosphate reductase small chain family. Heterodimer of a large and a small subunit. Fe cation is required as a cofactor.

It localises to the nucleus. It is found in the cytoplasm. The catalysed reaction is a 2'-deoxyribonucleoside 5'-diphosphate + [thioredoxin]-disulfide + H2O = a ribonucleoside 5'-diphosphate + [thioredoxin]-dithiol. Functionally, provides the precursors necessary for DNA synthesis. Catalyzes the biosynthesis of deoxyribonucleotides from the corresponding ribonucleotides. The protein is Ribonucleoside-diphosphate reductase small chain (suc22) of Schizosaccharomyces pombe (strain 972 / ATCC 24843) (Fission yeast).